Consider the following 323-residue polypeptide: Annexin A3 (323 aa).

A2 is subject to N-acetylalanine. 4 Annexin repeats span residues 18–89 (FSPS…ALVT), 90–161 (APAL…TLAD), 173–245 (HLAK…AIVH), and 249–320 (NTPA…KICG). Position 177 is an N6-acetyllysine (K177). Phosphothreonine is present on T267.

The protein belongs to the annexin family.

Its function is as follows. Inhibitor of phospholipase A2, also possesses anti-coagulant properties. This is Annexin A3 (Anxa3) from Mus musculus (Mouse).